Here is a 62-residue protein sequence, read N- to C-terminus: Large ribosomal subunit protein bL28 (62 aa).

A disordered region spans residues 1-28; that stretch reads MARVCAITGRKARSGNSRSHAMNATKRK.

This sequence belongs to the bacterial ribosomal protein bL28 family.

The protein is Large ribosomal subunit protein bL28 of Bacillus thuringiensis (strain Al Hakam).